A 413-amino-acid polypeptide reads, in one-letter code: Multidrug resistance protein MdtA (413 aa).

A signal peptide spans Met-1–Ala-32. Residues Ala-32 to His-46 are compositionally biased toward polar residues. The tract at residues Ala-32–Arg-59 is disordered.

It belongs to the membrane fusion protein (MFP) (TC 8.A.1) family. As to quaternary structure, part of a tripartite efflux system composed of MdtA, MdtB and MdtC.

It localises to the cell inner membrane. In Pectobacterium carotovorum subsp. carotovorum (strain PC1), this protein is Multidrug resistance protein MdtA.